The primary structure comprises 130 residues: Histone H2B (130 aa).

Residues 1–31 form a disordered region; the sequence is MAKSARHVTGKAPSSLDAHDRKKSKKKSSSM. K122 is covalently cross-linked (Glycyl lysine isopeptide (Lys-Gly) (interchain with G-Cter in ubiquitin)).

Belongs to the histone H2B family. The nucleosome is a histone octamer containing two molecules each of H2A, H2B, H3 and H4 assembled in one H3-H4 heterotetramer and two H2A-H2B heterodimers. The octamer wraps approximately 147 bp of DNA. In terms of processing, monoubiquitinated to form H2BK123ub1. H2BK123ub1 gives a specific tag for epigenetic transcriptional activation and is also prerequisite for H3K4me and H3K79me formation.

Its subcellular location is the nucleus. The protein localises to the chromosome. In terms of biological role, core component of nucleosome. Nucleosomes wrap and compact DNA into chromatin, limiting DNA accessibility to the cellular machineries which require DNA as a template. Histones thereby play a central role in transcription regulation, DNA repair, DNA replication and chromosomal stability. DNA accessibility is regulated via a complex set of post-translational modifications of histones, also called histone code, and nucleosome remodeling. The polypeptide is Histone H2B (HTB1) (Encephalitozoon cuniculi (strain GB-M1) (Microsporidian parasite)).